The sequence spans 335 residues: 3-isopropylmalate dehydrogenase (335 aa).

4 residues coordinate substrate: arginine 87, arginine 97, arginine 121, and aspartate 211. Residues aspartate 211, aspartate 235, and aspartate 239 each contribute to the Mg(2+) site. 271–283 contacts NAD(+); that stretch reads GSAPDIAGQSKAD.

This sequence belongs to the isocitrate and isopropylmalate dehydrogenases family. LeuB type 2 subfamily. Homodimer. Requires Mg(2+) as cofactor. Mn(2+) is required as a cofactor.

It localises to the cytoplasm. It carries out the reaction (2R,3S)-3-isopropylmalate + NAD(+) = 4-methyl-2-oxopentanoate + CO2 + NADH. Its pathway is amino-acid biosynthesis; L-leucine biosynthesis; L-leucine from 3-methyl-2-oxobutanoate: step 3/4. In terms of biological role, catalyzes the oxidation of 3-carboxy-2-hydroxy-4-methylpentanoate (3-isopropylmalate) to 3-carboxy-4-methyl-2-oxopentanoate. The product decarboxylates to 4-methyl-2 oxopentanoate. The polypeptide is 3-isopropylmalate dehydrogenase (Nocardia farcinica (strain IFM 10152)).